Reading from the N-terminus, the 77-residue chain is U8-lycotoxin-Ls1m (77 aa).

The first 20 residues, 1–20 (MKLMIFTGLVLFAIVRLIEA), serve as a signal peptide directing secretion. A propeptide spanning residues 21–26 (QAENEK) is cleaved from the precursor.

Belongs to the neurotoxin 19 (CSTX) family. 08 (U8-Lctx) subfamily. In terms of processing, contains 4 disulfide bonds. As to expression, expressed by the venom gland.

It is found in the secreted. The protein is U8-lycotoxin-Ls1m of Lycosa singoriensis (Wolf spider).